The primary structure comprises 235 residues: Putative homeobox-leucine zipper protein ATHB-51 (235 aa).

A DNA-binding region (homeobox) is located at residues 74–133 (EMIKKKRLTSGQLASLERSFQEEIKLDSDRKVKLSRELGLQPRQIAVWFQNRRARWKAKQ). A leucine-zipper region spans residues 134–162 (LEQLYDSLRQEYDVVSREKQMLHDEVKKL).

This sequence belongs to the HD-ZIP homeobox family. Class I subfamily. In terms of tissue distribution, widely expressed.

The protein resides in the nucleus. Putative transcription factor. The polypeptide is Putative homeobox-leucine zipper protein ATHB-51 (ATHB-51) (Arabidopsis thaliana (Mouse-ear cress)).